Consider the following 623-residue polypeptide: Aspartate--tRNA(Asp/Asn) ligase (623 aa).

Position 175 (E175) interacts with L-aspartate. The tract at residues 199-202 (QQFK) is aspartate. 2 residues coordinate L-aspartate: R221 and H455. Position 221-223 (221-223 (RDE)) interacts with ATP. E517 is a binding site for ATP. R524 is a binding site for L-aspartate. Residue 569 to 572 (GVDR) participates in ATP binding.

The protein belongs to the class-II aminoacyl-tRNA synthetase family. Type 1 subfamily. As to quaternary structure, homodimer.

It localises to the cytoplasm. It carries out the reaction tRNA(Asx) + L-aspartate + ATP = L-aspartyl-tRNA(Asx) + AMP + diphosphate. Functionally, aspartyl-tRNA synthetase with relaxed tRNA specificity since it is able to aspartylate not only its cognate tRNA(Asp) but also tRNA(Asn). Reaction proceeds in two steps: L-aspartate is first activated by ATP to form Asp-AMP and then transferred to the acceptor end of tRNA(Asp/Asn). The protein is Aspartate--tRNA(Asp/Asn) ligase of Methylocella silvestris (strain DSM 15510 / CIP 108128 / LMG 27833 / NCIMB 13906 / BL2).